Here is a 290-residue protein sequence, read N- to C-terminus: Short chain dehydrogenase/reductase nsrO (290 aa).

Positions 37 and 149 each coordinate NADP(+). Residues Ser-168 and Tyr-182 each act as proton donor in the active site. 3 residues coordinate NADP(+): Tyr-182, Lys-186, and Thr-221. Lys-186 acts as the Lowers pKa of active site Tyr in catalysis.

The protein belongs to the short-chain dehydrogenases/reductases (SDR) family.

It participates in secondary metabolite biosynthesis. In terms of biological role, short chain dehydrogenase/reductase; part of the gene cluster that mediates the biosynthesis of the tetrahydroxanthone dimer neosartorin, which exhibits antibacterial activity. The two different monomeric units appear to be synthesized by the same set of enzymes, among which the Baeyer-Villiger monooxygenase nsrF is the key enzyme for the divergence of the biosynthetic routes. The pathway begins with the synthesis of atrochrysone thioester by the polyketide synthase nsrB. The atrochrysone carboxyl ACP thioesterase nsrC then breaks the thioester bond and releases the atrochrysone carboxylic acid from AacuL. Atrochrysone carboxylic acid is decarboxylated by the decarboxylase nsrE, and oxidized by the anthrone oxygenase nsrD to yield emodin. Emodin is then reduced to emodin hydroquinone by the oxidoreductase nsrR. A-ring reduction by the short chain dehydrogenase nsrJ, dehydration by the scytalone dehydratase-like protein nsrI and probable spontaneous re-oxidation, results in overall deoxygenation to chrysophanol. The Baeyer-Villiger monooxygenase nsrF accepts chrysophanol as a substrate to insert one oxygen atom at two different positions to yield the precursors of both monomric units. NsrF is promiscuous/flexible in interacting with the 2 (non methylated and methylated) aromatic rings of chrysophanol, thus diverging the biosynthetic pathway at this point. After the hydrolysis of the lactones, methylesterification by the methyltransferase nsrG yields respectively moniliphenone and 2,2',6'-trihydroxy-4-methyl-6-methoxya-cyldiphenylmethanone. The next steps are the hydroxylation by the FAD-dependent monooxygenase nsrK, followed by isomerization by the monooxygenase nsrQ. The short chain dehydrogenase/reductase nsrO then catalyzes the C-5 ketoreduction to give the xanthone skeleton of blennolide C and 5-acetylblennolide A. The acetyltransferase nsrL has a strict substrate specificity and uses only blennolide A but not blennolide C to yield 5-acetylblennolide A as the single-acetylated product. In the final step of the biosynthesis, the heterodimerization of the 2 xanthones, blennolide C and 5-acetylblennolide A, is catalyzed by the cytochrome P450 monooxygenase nsrP. NsrP can utilize at least three different xanthones as its substrates to perform the dimerization reaction. In Aspergillus novofumigatus (strain IBT 16806), this protein is Short chain dehydrogenase/reductase nsrO.